Consider the following 341-residue polypeptide: Cyclic GMP-AMP synthase-like receptor (341 aa).

Residues S64 and 77–79 (EFD) each bind ATP. The Mg(2+) site is built by E77, D79, and D172. D172 contacts GTP. ATP-binding positions include K230 and 246–250 (SYHIK). Residue E258 coordinates Mn(2+).

This sequence belongs to the mab-21 family. Requires Mg(2+) as cofactor. It depends on Mn(2+) as a cofactor.

It catalyses the reaction GTP + ATP = 2',3'-cGAMP + 2 diphosphate. The enzyme catalyses GTP + ATP = pppGp(2'-5')A + diphosphate. It carries out the reaction pppGp(2'-5')A = 2',3'-cGAMP + diphosphate. Its function is as follows. Nucleotidyltransferase that catalyzes the formation of cyclic GMP-AMP (2',3'-cGAMP) from ATP and GTP and plays a key role in innate immunity. Acts as a key sensor of double-stranded RNA (dsRNA), the presence of dsRNA in the cytoplasm being a danger signal that triggers the immune responses. Directly binds dsRNA, activating the nucleotidyltransferase activity, leading to synthesis of 2',3'-cGAMP, a second messenger that binds to and activates Sting, thereby triggering the immune response via activation of the NF-kappa-B transcription factor. The protein is Cyclic GMP-AMP synthase-like receptor of Hydra vulgaris (Hydra).